The sequence spans 359 residues: Halocin-H4 (359 aa).

Positions 1–46 are cleaved as a signal peptide; that stretch reads MSKDRDGRRTSRRGTLKKIGGFSLGALSFGAVGRTQAATGSSVTTA. Disordered stretches follow at residues 40–59 and 340–359; these read GSSV…DPKS and IPDR…SRKQ.

The protein localises to the secreted. Has antibacterial activity against other haloarchaeons. Interacts with the membrane of the target cells where it causes permeability changes that result in an ionic imbalance leading to cell lysis and death. The polypeptide is Halocin-H4 (halH4) (Haloferax mediterranei (strain ATCC 33500 / DSM 1411 / JCM 8866 / NBRC 14739 / NCIMB 2177 / R-4) (Halobacterium mediterranei)).